The chain runs to 456 residues: Bifunctional protein GlmU (456 aa).

The segment at 1–228 (MPQNTLNIVI…SYLAAGVNNK (228 aa)) is pyrophosphorylase. UDP-N-acetyl-alpha-D-glucosamine is bound by residues 11–14 (LAAG), K25, Q75, 80–81 (GT), 102–104 (YGD), G138, E153, N168, and N226. D104 serves as a coordination point for Mg(2+). N226 is a binding site for Mg(2+). Residues 229–249 (LQLAELERIFQTEQAQELLKA) form a linker region. The tract at residues 250–456 (GVTLSDPARF…GWVRPEKDKQ (207 aa)) is N-acetyltransferase. Residues R332 and K350 each contribute to the UDP-N-acetyl-alpha-D-glucosamine site. Residue H362 is the Proton acceptor of the active site. UDP-N-acetyl-alpha-D-glucosamine-binding residues include Y365 and N376. Acetyl-CoA is bound by residues A379, 385–386 (NY), S404, A422, and R439.

In the N-terminal section; belongs to the N-acetylglucosamine-1-phosphate uridyltransferase family. It in the C-terminal section; belongs to the transferase hexapeptide repeat family. In terms of assembly, homotrimer. It depends on Mg(2+) as a cofactor.

The protein resides in the cytoplasm. The enzyme catalyses alpha-D-glucosamine 1-phosphate + acetyl-CoA = N-acetyl-alpha-D-glucosamine 1-phosphate + CoA + H(+). It carries out the reaction N-acetyl-alpha-D-glucosamine 1-phosphate + UTP + H(+) = UDP-N-acetyl-alpha-D-glucosamine + diphosphate. Its pathway is nucleotide-sugar biosynthesis; UDP-N-acetyl-alpha-D-glucosamine biosynthesis; N-acetyl-alpha-D-glucosamine 1-phosphate from alpha-D-glucosamine 6-phosphate (route II): step 2/2. The protein operates within nucleotide-sugar biosynthesis; UDP-N-acetyl-alpha-D-glucosamine biosynthesis; UDP-N-acetyl-alpha-D-glucosamine from N-acetyl-alpha-D-glucosamine 1-phosphate: step 1/1. It participates in bacterial outer membrane biogenesis; LPS lipid A biosynthesis. Catalyzes the last two sequential reactions in the de novo biosynthetic pathway for UDP-N-acetylglucosamine (UDP-GlcNAc). The C-terminal domain catalyzes the transfer of acetyl group from acetyl coenzyme A to glucosamine-1-phosphate (GlcN-1-P) to produce N-acetylglucosamine-1-phosphate (GlcNAc-1-P), which is converted into UDP-GlcNAc by the transfer of uridine 5-monophosphate (from uridine 5-triphosphate), a reaction catalyzed by the N-terminal domain. This chain is Bifunctional protein GlmU, found in Neisseria meningitidis serogroup C / serotype 2a (strain ATCC 700532 / DSM 15464 / FAM18).